The sequence spans 509 residues: ATP synthase subunit alpha 1 (509 aa).

ATP is bound at residue 172-179; that stretch reads GDRQTGKT.

Belongs to the ATPase alpha/beta chains family. In terms of assembly, F-type ATPases have 2 components, CF(1) - the catalytic core - and CF(0) - the membrane proton channel. CF(1) has five subunits: alpha(3), beta(3), gamma(1), delta(1), epsilon(1). CF(0) has four main subunits: a(1), b(1), b'(1) and c(9-12).

It localises to the cell inner membrane. It catalyses the reaction ATP + H2O + 4 H(+)(in) = ADP + phosphate + 5 H(+)(out). Its function is as follows. Produces ATP from ADP in the presence of a proton gradient across the membrane. The alpha chain is a regulatory subunit. The sequence is that of ATP synthase subunit alpha 1 from Dinoroseobacter shibae (strain DSM 16493 / NCIMB 14021 / DFL 12).